Here is a 261-residue protein sequence, read N- to C-terminus: Ribonuclease 3 (261 aa).

Residues 20-144 (YFALYRMLGF…FIGAIYLDKG (125 aa)) form the RNase III domain. Glu62 provides a ligand contact to Mg(2+). Asp66 is a catalytic residue. Mg(2+) is bound by residues Asn130 and Glu133. Glu133 is a catalytic residue. Residues 172 to 241 (NFKSKLFEWC…SQMTWRKIRT (70 aa)) form the DRBM domain.

This sequence belongs to the ribonuclease III family. Homodimer. Requires Mg(2+) as cofactor.

It localises to the cytoplasm. The catalysed reaction is Endonucleolytic cleavage to 5'-phosphomonoester.. Its function is as follows. Digests double-stranded RNA. Involved in the processing of primary rRNA transcript to yield the immediate precursors to the large and small rRNAs (23S and 16S). Processes some mRNAs, and tRNAs when they are encoded in the rRNA operon. Processes pre-crRNA and tracrRNA of type II CRISPR loci if present in the organism. This chain is Ribonuclease 3, found in Azobacteroides pseudotrichonymphae genomovar. CFP2.